Here is an 88-residue protein sequence, read N- to C-terminus: Small ribosomal subunit protein bS20 (88 aa).

The interval 1-25 is disordered; the sequence is MANSAQARKRVRQNNTRRQHAASQR. Basic residues predominate over residues 7–20; the sequence is ARKRVRQNNTRRQH.

The protein belongs to the bacterial ribosomal protein bS20 family.

In terms of biological role, binds directly to 16S ribosomal RNA. This chain is Small ribosomal subunit protein bS20, found in Psychrobacter sp. (strain PRwf-1).